We begin with the raw amino-acid sequence, 1199 residues long: AP-3 complex subunit delta-1 (1199 aa).

Alanine 2 carries the N-acetylalanine modification. HEAT repeat units follow at residues 34–71, 142–179, 180–216, 218–254, 257–296, 298–336, 337–373, 375–409, and 521–558; these read KYIS…LGYD, DLAR…KYPE, SLRP…RNPK, YLSL…LEPR, KKLI…GMPN, SASI…THPK, SVQS…KKNL, EIVK…QSNY, and VYVQ…ERLP. Disordered stretches follow at residues 623-695 and 724-963; these read LDAW…RYQD and YVKL…EPIP. 3 positions are modified to phosphoserine: serine 632, serine 634, and serine 636. Basic and acidic residues-rich tracts occupy residues 639–651 and 665–675; these read EKPK…EEPR and LARRREARKQE. The stretch at 659 to 679 forms a coiled coil; it reads EEDEEELARRREARKQEQANN. Phosphoserine is present on serine 688. A coiled-coil region spans residues 722–750; that stretch reads DQYVKLEEQRRHRQRLEKDKKRKKKEKGK. Residues 732–754 are compositionally biased toward basic residues; the sequence is RHRQRLEKDKKRKKKEKGKRRHS. Phosphoserine is present on residues serine 754 and serine 755. Threonine 758 is modified (phosphothreonine). Phosphoserine is present on residues serine 760, serine 784, and serine 825. A compositionally biased stretch (acidic residues) spans 773-790; that stretch reads ITEEMPENALPSDEDDKD. Residues 791–836 show a composition bias toward basic and acidic residues; it reads PNDPYRALDIDLDKPLADSEKLPVQKHRNAEAVKSPEKEGVLGVEK. A compositionally biased stretch (basic residues) spans 837 to 846; the sequence is KSKKPKKKEK. A coiled-coil region spans residues 843–863; it reads KKEKKTKEREREKKDKKGEDL. Residues 847–862 show a composition bias toward basic and acidic residues; sequence KTKEREREKKDKKGED. Pro residues predominate over residues 870 to 880; it reads TPPPAAAPIPA. Basic and acidic residues predominate over residues 894 to 916; sequence PKDECEVLKGEEEDHVDHDQERK. A coiled-coil region spans residues 911 to 934; that stretch reads HDQERKSSRHKKKKHRKEKEKEER. Residues 917–928 show a composition bias toward basic residues; the sequence is SSRHKKKKHRKE.

This sequence belongs to the adaptor complexes large subunit family. As to quaternary structure, adaptor protein complex 3 (AP-3) is a heterotetramer composed of two large adaptins (delta-type subunit AP3D1 and beta-type subunit AP3B1 or AP3B2), a medium adaptin (mu-type subunit AP3M1 or AP3M2) and a small adaptin (sigma-type subunit APS1 or AP3S2). AP-3 associates with the BLOC-1 complex. Interacts with SLC30A2. Interacts with CLN3 (via dileucine motif); this interaction facilitates lysosomal targeting.

The protein resides in the cytoplasm. The protein localises to the golgi apparatus membrane. In terms of biological role, part of the AP-3 complex, an adaptor-related complex which is not clathrin-associated. The complex is associated with the Golgi region as well as more peripheral structures. It facilitates the budding of vesicles from the Golgi membrane and may be directly involved in trafficking to lysosomes. Involved in process of CD8+ T-cell and NK cell degranulation. In concert with the BLOC-1 complex, AP-3 is required to target cargos into vesicles assembled at cell bodies for delivery into neurites and nerve terminals. This Mus musculus (Mouse) protein is AP-3 complex subunit delta-1 (Ap3d1).